Consider the following 182-residue polypeptide: ATP-dependent protease subunit HslV (182 aa).

T12 is a catalytic residue. 3 residues coordinate Na(+): A167, C170, and T173.

Belongs to the peptidase T1B family. HslV subfamily. As to quaternary structure, a double ring-shaped homohexamer of HslV is capped on each side by a ring-shaped HslU homohexamer. The assembly of the HslU/HslV complex is dependent on binding of ATP.

The protein resides in the cytoplasm. The enzyme catalyses ATP-dependent cleavage of peptide bonds with broad specificity.. Its activity is regulated as follows. Allosterically activated by HslU binding. In terms of biological role, protease subunit of a proteasome-like degradation complex believed to be a general protein degrading machinery. In Pelodictyon phaeoclathratiforme (strain DSM 5477 / BU-1), this protein is ATP-dependent protease subunit HslV.